Reading from the N-terminus, the 147-residue chain is Putative protein CLUHP3 (147 aa).

Residues 14 to 47 (KEPEGGRRRLSHPGNMGWMRPSQETTPPDRSHHS) are disordered.

This chain is Putative protein CLUHP3 (CLUHP3), found in Homo sapiens (Human).